The following is a 1076-amino-acid chain: MNEQDLLNSLRRDLNLPNLGKSHDGSEAVESTFPEKKESSLSAQQPHVDDQRSSLLSLLNAGLNASNQSPSNSGPKYYASHSSSTDALLQAFRDGAKPSGTASGADVKRSDSESTEATSNERPFNPVSAANLERLLMSSTGPQTPINGELKSNDSQDTAFQSSRNMPSDTSVASPDYSHSQSSSPIANYQESGNSEEPHKAEEQQQLSIYQLDNPGSGNYVWETVISPDKFETSTFAKCERNDIAIINRELDAQDNQLIHTNEDFIAYAVHREPIIRVIEISTGKSFLLHNNSPNKFVSVAWGNDSVIKNRLMAIDTTGQVLIFAVDIATSTSEIIFQLSGAQSLSDPIKSRFHWYPKSSTRFAVALSKHIIFFDLDLLNNISFPIPRSINAIQQLPCFLIDTGISAKEYDFSYDGTVFATVDKDALIKIYTVPTTFPSTPDKRPVPSEVSPIAIFTTRMERGPSKNYEKPINLRFISTPGTNNSRYLVIVYVMNQLITLFDLYSKRNIQTFRFNNRPTAATTTSFSQFSVDNERSTLLVGNPPSNSIYFFLFAKDETVSEQAPIYNSTYELILASLNTSEPVPADAKFSVIVAKKFEKAACISFTACKILESEDKYCIVVSNTDGYEYYSIPTSILDKTGKTVRSLESVQNYDADIGGTIDLTERHSTASPSTVNSGFSTPRSQATGFSKKKKDKGERFETKDKSSSVLSPSSYSASTFDAIPMDSIVSNILASLEKSVHKNYESLRSQLLEYKAANEKHTEAILSVVSSTLTENTGKILESVVEKSMQVALKEEIANSVRNALKNNLEKIESFLENSIAELQNSVREDFDKQTSSLAQLRYSIQNVAHAQKESEVKYNELNEQVKTLEGYVETVLEKFNDLKIENKVPETAPDVVPSSYPPAAESNVSVSSDTSTKDVEKQEPSSAEQPAQGIAESLRRLKEYVKAGSVKECVAEWCNMPSVAGFDVLSEISYDRMLENCSNLLLLTFIYHISLLDSVDDDRLSKRMEYISRICLNIDVNDPKVETVVHPVLTLTREALLRQSEFFSPIFKRRLVVLLRALDGKISEISVASSN.

Composition is skewed to low complexity over residues Met1 to Leu19 and Ser53 to Ser69. Disordered stretches follow at residues Met1 to Ser82, Gly95 to Val127, and Ser139 to Gln204. Positions Pro70–Ser82 are enriched in polar residues. The span at Asn153–Ala173 shows a compositional bias: polar residues. Over residues Ser174–Ser184 the composition is skewed to low complexity. Positions Pro185–Ser195 are enriched in polar residues. 2 WD repeats span residues Asn292–Glu334 and Asp402–Pro441. Disordered stretches follow at residues Arg666–Ser714 and Thr892–Gly934. Positions Thr669–Gly688 are enriched in polar residues. Ser671 and Ser673 each carry phosphoserine. Thr674 bears the Phosphothreonine mark. The span at Asp695 to Ser706 shows a compositional bias: basic and acidic residues. Residues Met789–Asn1076 form an interaction with dcp2 region. Ser1075 carries the phosphoserine modification.

It belongs to the WD repeat EDC4 family. Interacts with dcp2; via C-terminus.

It is found in the cytoplasm. The protein localises to the P-body. Involved in P-body formation. Acts as a functional homolog of human EDC4, which plays a role in mRNA decapping in the process of mRNA degradation. Enhances the decapping activity of dcp2. Together with edc3, acts as a scaffolding protein sufficient for the phase transition of the components of the 5' to 3' mRNA degradation machinery to form P-bodies. Intermolecular interactions between the edc3 Sm domain and at least 10 helical leucine-rich motifs in dcp2 and pdc1 build the core of the interaction network of this spontaneous clustering process. The sequence is that of Enhancer of mRNA-decapping protein 4-like protein pdc1 from Schizosaccharomyces pombe (strain 972 / ATCC 24843) (Fission yeast).